The sequence spans 437 residues: Dolichyl-diphosphooligosaccharide--protein glycosyltransferase 48 kDa subunit (437 aa).

An N-terminal signal peptide occupies residues 1–24; it reads MVNLSRSVALISVFLLPLLSFSFS. Residues 25–414 are Lumenal-facing; that stretch reads VDNPTDRRVL…YERFIPTAYP (390 aa). A helical membrane pass occupies residues 415–435; it reads YYGACFTTMAGFFVFSFVYLY. Residues 436-437 lie on the Cytoplasmic side of the membrane; sequence HK.

It belongs to the DDOST 48 kDa subunit family. In terms of assembly, component of the oligosaccharyltransferase (OST) complex.

The protein localises to the endoplasmic reticulum membrane. It participates in protein modification; protein glycosylation. In terms of biological role, subunit of the oligosaccharyl transferase (OST) complex that catalyzes the initial transfer of a defined glycan (Glc(3)Man(9)GlcNAc(2) in eukaryotes) from the lipid carrier dolichol-pyrophosphate to an asparagine residue within an Asn-X-Ser/Thr consensus motif in nascent polypeptide chains, the first step in protein N-glycosylation. N-glycosylation occurs cotranslationally and the complex associates with the Sec61 complex at the channel-forming translocon complex that mediates protein translocation across the endoplasmic reticulum (ER). All subunits are required for a maximal enzyme activity. This chain is Dolichyl-diphosphooligosaccharide--protein glycosyltransferase 48 kDa subunit (OST48), found in Arabidopsis thaliana (Mouse-ear cress).